A 28-amino-acid chain; its full sequence is Glutathione S-transferase 5 (28 aa).

In terms of domain architecture, GST N-terminal spans 1–28 (PNYKLTYFNLRGRAEISRYLFAYAGIKY). Residue Tyr7 coordinates glutathione.

Belongs to the GST superfamily. Sigma family. Homodimer.

Its subcellular location is the cytoplasm. It carries out the reaction RX + glutathione = an S-substituted glutathione + a halide anion + H(+). Functionally, conjugation of reduced glutathione to a wide number of exogenous and endogenous hydrophobic electrophiles. This Gallus gallus (Chicken) protein is Glutathione S-transferase 5.